The following is a 223-amino-acid chain: Ribonuclease 3 (223 aa).

One can recognise an RNase III domain in the interval 3–125; the sequence is LERLQKKLSY…IIAAIYLDAG (123 aa). Glu38 serves as a coordination point for Mg(2+). Residue Asp42 is part of the active site. 2 residues coordinate Mg(2+): Asp111 and Glu114. Glu114 is an active-site residue. The 71-residue stretch at 152–222 folds into the DRBM domain; that stretch reads DPKTRLQEFL…AEQVLAKLTT (71 aa).

The protein belongs to the ribonuclease III family. Homodimer. The cofactor is Mg(2+).

The protein localises to the cytoplasm. The enzyme catalyses Endonucleolytic cleavage to 5'-phosphomonoester.. In terms of biological role, digests double-stranded RNA. Involved in the processing of primary rRNA transcript to yield the immediate precursors to the large and small rRNAs (23S and 16S). Processes some mRNAs, and tRNAs when they are encoded in the rRNA operon. Processes pre-crRNA and tracrRNA of type II CRISPR loci if present in the organism. This Actinobacillus pleuropneumoniae serotype 5b (strain L20) protein is Ribonuclease 3.